Reading from the N-terminus, the 328-residue chain is Malate dehydrogenase (328 aa).

Residue 12–18 (GAAGQIG) participates in NAD(+) binding. Residues Arg93 and Arg99 each coordinate substrate. Residues Asn106, Gln113, and 130–132 (VGN) contribute to the NAD(+) site. Residues Asn132 and Arg166 each contribute to the substrate site. The active-site Proton acceptor is the His191.

This sequence belongs to the LDH/MDH superfamily. MDH type 2 family.

It carries out the reaction (S)-malate + NAD(+) = oxaloacetate + NADH + H(+). In terms of biological role, catalyzes the reversible oxidation of malate to oxaloacetate. In Dechloromonas aromatica (strain RCB), this protein is Malate dehydrogenase.